The chain runs to 1028 residues: RNA cytidine acetyltransferase 2 (1028 aa).

ATP-binding positions include 286–295 (GRGKSAALGL) and Arg458. Residues 546-729 (VLLGPVDESQ…FAPFYVSQIP (184 aa)) form the N-acetyltransferase domain. Residues 617 to 619 (IAV), 624 to 630 (MKMGYGS), and Lys717 each bind acetyl-CoA. A disordered region spans residues 982–1028 (SGIISVKSTKSENENGFDKSTKKRSSDKRSSSSSKSKSSKKRKSLKE). Positions 990–1001 (TKSENENGFDKS) are enriched in basic and acidic residues. The span at 1018-1028 (KSSKKRKSLKE) shows a compositional bias: basic residues.

This sequence belongs to the RNA cytidine acetyltransferase family. NAT10 subfamily.

It is found in the nucleus. The protein localises to the nucleolus. It catalyses the reaction a cytidine in 18S rRNA + acetyl-CoA + ATP + H2O = an N(4)-acetylcytidine in 18S rRNA + ADP + phosphate + CoA + H(+). The enzyme catalyses a cytidine in tRNA + acetyl-CoA + ATP + H2O = an N(4)-acetylcytidine in tRNA + ADP + phosphate + CoA + H(+). Functionally, RNA cytidine acetyltransferase with specificity toward both 18S rRNA and tRNAs. Catalyzes the formation of N(4)-acetylcytidine (ac4C) in 18S rRNA. Required for early nucleolar cleavages of precursor rRNA at sites A0, A1 and A2 during 18S rRNA synthesis. Catalyzes the formation of ac4C in serine and leucine tRNAs. Requires a tRNA-binding adapter protein for full tRNA acetyltransferase activity but not for 18S rRNA acetylation. In Arabidopsis thaliana (Mouse-ear cress), this protein is RNA cytidine acetyltransferase 2.